Consider the following 313-residue polypeptide: Biotin synthase (313 aa).

Residues 28–258 (NFGNDIELCS…LFPQARLRLS (231 aa)) form the Radical SAM core domain. [4Fe-4S] cluster-binding residues include Cys46, Cys50, and Cys53. Residues Cys90, Cys121, Cys181, and Arg256 each contribute to the [2Fe-2S] cluster site.

Belongs to the radical SAM superfamily. Biotin synthase family. Homodimer. It depends on [4Fe-4S] cluster as a cofactor. The cofactor is [2Fe-2S] cluster.

It catalyses the reaction (4R,5S)-dethiobiotin + (sulfur carrier)-SH + 2 reduced [2Fe-2S]-[ferredoxin] + 2 S-adenosyl-L-methionine = (sulfur carrier)-H + biotin + 2 5'-deoxyadenosine + 2 L-methionine + 2 oxidized [2Fe-2S]-[ferredoxin]. It functions in the pathway cofactor biosynthesis; biotin biosynthesis; biotin from 7,8-diaminononanoate: step 2/2. Functionally, catalyzes the conversion of dethiobiotin (DTB) to biotin by the insertion of a sulfur atom into dethiobiotin via a radical-based mechanism. This is Biotin synthase from Francisella tularensis subsp. tularensis (strain WY96-3418).